The sequence spans 200 residues: MASKIETLKANLEAALGARVVSLTEAIGELTLVVKASDYLEVAKTLRDDPKLRFEQLIDLCGIDYQTYGDGAYDGPRFAAVSQLLSVTNNWRLRLRVFAPDDDLPIVPSLVDTWSSSNWYEREAFDLYGLVFEGHPDLRRLLTDYGFIGHPFRKDFPVSGYVEMRYDPEEKRVVYQPVTIEPREITPRVIREDRYGGLKH.

The protein belongs to the complex I 30 kDa subunit family. In terms of assembly, NDH-1 is composed of 14 different subunits. Subunits NuoB, C, D, E, F, and G constitute the peripheral sector of the complex.

It localises to the cell inner membrane. The catalysed reaction is a quinone + NADH + 5 H(+)(in) = a quinol + NAD(+) + 4 H(+)(out). Its function is as follows. NDH-1 shuttles electrons from NADH, via FMN and iron-sulfur (Fe-S) centers, to quinones in the respiratory chain. The immediate electron acceptor for the enzyme in this species is believed to be ubiquinone. Couples the redox reaction to proton translocation (for every two electrons transferred, four hydrogen ions are translocated across the cytoplasmic membrane), and thus conserves the redox energy in a proton gradient. In Burkholderia vietnamiensis (strain G4 / LMG 22486) (Burkholderia cepacia (strain R1808)), this protein is NADH-quinone oxidoreductase subunit C.